A 118-amino-acid chain; its full sequence is Large ribosomal subunit protein bL20 (118 aa).

It belongs to the bacterial ribosomal protein bL20 family.

In terms of biological role, binds directly to 23S ribosomal RNA and is necessary for the in vitro assembly process of the 50S ribosomal subunit. It is not involved in the protein synthesizing functions of that subunit. This chain is Large ribosomal subunit protein bL20, found in Staphylococcus saprophyticus subsp. saprophyticus (strain ATCC 15305 / DSM 20229 / NCIMB 8711 / NCTC 7292 / S-41).